A 315-amino-acid chain; its full sequence is Lipoyl synthase (315 aa).

[4Fe-4S] cluster is bound by residues C62, C67, C73, C88, C92, C95, and S302. Residues 74-291 (FNHGAATFMI…KKIALKLGFS (218 aa)) enclose the Radical SAM core domain.

This sequence belongs to the radical SAM superfamily. Lipoyl synthase family. It depends on [4Fe-4S] cluster as a cofactor.

The protein localises to the cytoplasm. It carries out the reaction [[Fe-S] cluster scaffold protein carrying a second [4Fe-4S](2+) cluster] + N(6)-octanoyl-L-lysyl-[protein] + 2 oxidized [2Fe-2S]-[ferredoxin] + 2 S-adenosyl-L-methionine + 4 H(+) = [[Fe-S] cluster scaffold protein] + N(6)-[(R)-dihydrolipoyl]-L-lysyl-[protein] + 4 Fe(3+) + 2 hydrogen sulfide + 2 5'-deoxyadenosine + 2 L-methionine + 2 reduced [2Fe-2S]-[ferredoxin]. The protein operates within protein modification; protein lipoylation via endogenous pathway; protein N(6)-(lipoyl)lysine from octanoyl-[acyl-carrier-protein]: step 2/2. In terms of biological role, catalyzes the radical-mediated insertion of two sulfur atoms into the C-6 and C-8 positions of the octanoyl moiety bound to the lipoyl domains of lipoate-dependent enzymes, thereby converting the octanoylated domains into lipoylated derivatives. The chain is Lipoyl synthase from Ruthia magnifica subsp. Calyptogena magnifica.